Reading from the N-terminus, the 75-residue chain is Putative DNA-directed RNA polymerase subunit omega (75 aa).

The protein belongs to the RNA polymerase subunit omega family.

It localises to the plastid. The protein resides in the chloroplast. The enzyme catalyses RNA(n) + a ribonucleoside 5'-triphosphate = RNA(n+1) + diphosphate. In terms of biological role, may be involved in RNA polymerase activity. This is Putative DNA-directed RNA polymerase subunit omega from Pyropia yezoensis (Susabi-nori).